Reading from the N-terminus, the 104-residue chain is Small ribosomal subunit protein uS10 (104 aa).

Belongs to the universal ribosomal protein uS10 family. In terms of assembly, part of the 30S ribosomal subunit.

In terms of biological role, involved in the binding of tRNA to the ribosomes. This is Small ribosomal subunit protein uS10 from Alkaliphilus oremlandii (strain OhILAs) (Clostridium oremlandii (strain OhILAs)).